The sequence spans 494 residues: MAAAAECDVVMAATEPELLDDQEAKREAETFKEQGNAYYAKKDYNEAYNYYTKAIDMCPKNASYYGNRAATLMMLGRFREALGDAQQSVRLDDSFVRGHLREGKCHLSLGNAMAACRSFQRALELDHKNAQAQQEFKNANAVMEYEKIAETDFEKRDFRKVVFCMDRALEFAPACHRFKILKAECLAMLGRYPEAQSVASDILRMDSTNADALYVRGLCLYYEDCIEKAVQFFVQALRMAPDHEKACIACRNAKALKAKKEDGNKAFKEGNYKLAYELYTEALGIDPNNIKTNAKLYCNRGTVNSKLRKLDDAIEDCTNAVKLDDTYIKAYLRRAQCYMDTEQYEEAVRDYEKVYQTEKTKEHKQLLKNAQLELKKSKRKDYYKILGVDKNASEDEIKKAYRKRALMHHPDRHSGASAEVQKEEEKKFKEVGEAFTILSDPKKKTRYDSGQDLDEEGMNMGDFDPNNIFKAFFGGPGGFSFEASGPGNFFFQFG.

N-acetylalanine is present on Ala2. TPR repeat units follow at residues 28–61 (AETF…CPKN), 62–95 (ASYY…DDSF), 96–129 (VRGH…DHKN), 142–175 (VMEY…APAC), 177–209 (RFKI…DSTN), 210–243 (ADAL…APDH), 256–289 (LKAK…DPNN), 294–327 (AKLY…DDTY), and 328–361 (IKAY…EKTK). In terms of domain architecture, J spans 381–451 (DYYKILGVDK…KKKTRYDSGQ (71 aa)). At Ser393 the chain carries Phosphoserine.

As to quaternary structure, associates with complexes containing chaperones HSP70 and HSP90. Interacts with the GAP domain of NF1. Interacts with HSP90AA1. Interacts with HSPA1A/B; the interaction is enhanced by ATP. Interacts with HSP90AB1. Interacts with PGR. Interacts with RAD9A; the interaction is interrupted by UV and heat shock treatments. Interacts with HUS1 and RAD1. Interacts with NR1I3. The DNAJC7-NR1I3 complex may also include HSP90. Interacts with HSPA8.

The protein resides in the cytoplasm. Its subcellular location is the nucleus. The protein localises to the cytoskeleton. In terms of biological role, acts as a co-chaperone regulating the molecular chaperones HSP70 and HSP90 in folding of steroid receptors, such as the glucocorticoid receptor and the progesterone receptor. Proposed to act as a recycling chaperone by facilitating the return of chaperone substrates to early stages of chaperoning if further folding is required. In vitro, induces ATP-independent dissociation of HSP90 but not of HSP70 from the chaperone-substrate complexes. Recruits NR1I3 to the cytoplasm. This is DnaJ homolog subfamily C member 7 (DNAJC7) from Homo sapiens (Human).